Here is a 271-residue protein sequence, read N- to C-terminus: Phosphatidylglycerol--prolipoprotein diacylglyceryl transferase (271 aa).

The next 7 helical transmembrane spans lie at 25-45 (WYGIMYVIALLLALLLAKFFV), 60-80 (YFIWVEIGVILGARLGYILIY), 103-123 (FVGIRGMSYHGAIIGFLIATL), 134-154 (WIFLDLVALSVPLAYVFGRIG), 181-201 (PSQLYEAFLEGIVVFIIVYLA), 209-229 (GELILVYAGAYSLARFICEFY), and 235-255 (GIGFVLWGMSMGQILSFIMFI). Arginine 152 contacts a 1,2-diacyl-sn-glycero-3-phospho-(1'-sn-glycerol).

Belongs to the Lgt family.

Its subcellular location is the cell inner membrane. It catalyses the reaction L-cysteinyl-[prolipoprotein] + a 1,2-diacyl-sn-glycero-3-phospho-(1'-sn-glycerol) = an S-1,2-diacyl-sn-glyceryl-L-cysteinyl-[prolipoprotein] + sn-glycerol 1-phosphate + H(+). Its pathway is protein modification; lipoprotein biosynthesis (diacylglyceryl transfer). In terms of biological role, catalyzes the transfer of the diacylglyceryl group from phosphatidylglycerol to the sulfhydryl group of the N-terminal cysteine of a prolipoprotein, the first step in the formation of mature lipoproteins. The sequence is that of Phosphatidylglycerol--prolipoprotein diacylglyceryl transferase from Campylobacter jejuni subsp. jejuni serotype O:6 (strain 81116 / NCTC 11828).